A 405-amino-acid chain; its full sequence is S-adenosylmethionine synthase (405 aa).

Position 139 to 144 (139 to 144 (GKGSAD)) interacts with ATP.

Belongs to the AdoMet synthase 2 family. The cofactor is Mg(2+).

The enzyme catalyses L-methionine + ATP + H2O = S-adenosyl-L-methionine + phosphate + diphosphate. It functions in the pathway amino-acid biosynthesis; S-adenosyl-L-methionine biosynthesis; S-adenosyl-L-methionine from L-methionine: step 1/1. Its function is as follows. Catalyzes the formation of S-adenosylmethionine from methionine and ATP. This chain is S-adenosylmethionine synthase, found in Sulfurisphaera tokodaii (strain DSM 16993 / JCM 10545 / NBRC 100140 / 7) (Sulfolobus tokodaii).